The chain runs to 335 residues: MTRILDNDLIGDEGSVERTLRPQYLREYIGQDRVKDQLMIFIEAAKRREESLDHVLLFGSPGLGKTTMAFVIANELGVHLKQTSGPAIEKAGDLVAILNDLEPGDVLFIDEIHRMPMAVEEILYSAMEDFYIDIMIGAGDTSRSVHLELPPFTLIGATTRAGMLSNPLRARFGITGHMEYYQTADLTEIVERTADIFDMTIKHEAAYELARRSRGTPRIANRLLKRVRDYAQIMGDGMITTQITDKALTMLDVDQEGLDYVDQKILRTMIEVYQGGPVGLGTLSVNIAEERDTVEDMYEPYLIQKGFIMRTRTGRVVTEKAYQHLGYPYEKTIKT.

Residues 1-181 (MTRILDNDLI…FGITGHMEYY (181 aa)) form a large ATPase domain (RuvB-L) region. Residues L20, R21, G62, K65, T66, T67, 128-130 (EDF), R171, Y181, and R218 each bind ATP. T66 lines the Mg(2+) pocket. Positions 182–252 (QTADLTEIVE…ITDKALTMLD (71 aa)) are small ATPAse domain (RuvB-S). Residues 255–335 (QEGLDYVDQK…GYPYEKTIKT (81 aa)) form a head domain (RuvB-H) region. Residues R291, R310, R312, and R315 each contribute to the DNA site.

The protein belongs to the RuvB family. Homohexamer. Forms an RuvA(8)-RuvB(12)-Holliday junction (HJ) complex. HJ DNA is sandwiched between 2 RuvA tetramers; dsDNA enters through RuvA and exits via RuvB. An RuvB hexamer assembles on each DNA strand where it exits the tetramer. Each RuvB hexamer is contacted by two RuvA subunits (via domain III) on 2 adjacent RuvB subunits; this complex drives branch migration. In the full resolvosome a probable DNA-RuvA(4)-RuvB(12)-RuvC(2) complex forms which resolves the HJ.

It is found in the cytoplasm. The catalysed reaction is ATP + H2O = ADP + phosphate + H(+). Its function is as follows. The RuvA-RuvB-RuvC complex processes Holliday junction (HJ) DNA during genetic recombination and DNA repair, while the RuvA-RuvB complex plays an important role in the rescue of blocked DNA replication forks via replication fork reversal (RFR). RuvA specifically binds to HJ cruciform DNA, conferring on it an open structure. The RuvB hexamer acts as an ATP-dependent pump, pulling dsDNA into and through the RuvAB complex. RuvB forms 2 homohexamers on either side of HJ DNA bound by 1 or 2 RuvA tetramers; 4 subunits per hexamer contact DNA at a time. Coordinated motions by a converter formed by DNA-disengaged RuvB subunits stimulates ATP hydrolysis and nucleotide exchange. Immobilization of the converter enables RuvB to convert the ATP-contained energy into a lever motion, pulling 2 nucleotides of DNA out of the RuvA tetramer per ATP hydrolyzed, thus driving DNA branch migration. The RuvB motors rotate together with the DNA substrate, which together with the progressing nucleotide cycle form the mechanistic basis for DNA recombination by continuous HJ branch migration. Branch migration allows RuvC to scan DNA until it finds its consensus sequence, where it cleaves and resolves cruciform DNA. This Streptococcus equi subsp. equi (strain 4047) protein is Holliday junction branch migration complex subunit RuvB.